Reading from the N-terminus, the 357-residue chain is GTPase Obg (357 aa).

In terms of domain architecture, Obg spans 1–159 (MKFVDEAEIQ…RTLKLELKLL (159 aa)). An OBG-type G domain is found at 160–343 (ADIGMLGFPN…IMKSAMTLFE (184 aa)). Residues 166–173 (GFPNVGKS), 191–195 (FTTLY), 213–216 (DVPG), 293–296 (NKAD), and 324–326 (SAV) contribute to the GTP site. Residues S173 and T193 each contribute to the Mg(2+) site.

The protein belongs to the TRAFAC class OBG-HflX-like GTPase superfamily. OBG GTPase family. Monomer. Mg(2+) is required as a cofactor.

The protein resides in the cytoplasm. Its function is as follows. An essential GTPase which binds GTP, GDP and possibly (p)ppGpp with moderate affinity, with high nucleotide exchange rates and a fairly low GTP hydrolysis rate. Plays a role in control of the cell cycle, stress response, ribosome biogenesis and in those bacteria that undergo differentiation, in morphogenesis control. The sequence is that of GTPase Obg from Xylella fastidiosa (strain M23).